A 118-amino-acid chain; its full sequence is Small ribosomal subunit protein uS13 (118 aa).

Residues 95 to 118 (LPLRGQRTRTNARTRKGPRKAIKK) are disordered.

Belongs to the universal ribosomal protein uS13 family. Part of the 30S ribosomal subunit. Forms a loose heterodimer with protein S19. Forms two bridges to the 50S subunit in the 70S ribosome.

Located at the top of the head of the 30S subunit, it contacts several helices of the 16S rRNA. In the 70S ribosome it contacts the 23S rRNA (bridge B1a) and protein L5 of the 50S subunit (bridge B1b), connecting the 2 subunits; these bridges are implicated in subunit movement. Contacts the tRNAs in the A and P-sites. This Xylella fastidiosa (strain 9a5c) protein is Small ribosomal subunit protein uS13.